A 158-amino-acid chain; its full sequence is MAEVGSKSVLFVCLGNICRSPIAEAVFRKLVTDEKVSDNWRIDSAATSTYEVGNPPDYRGQNCMRKHGIHMQHIARQITKEDFATFDYILCMDESNLRDLNRKSNQVKNCKAKIELLGSYDPQKQLIIEDPYYGNDSDFEVVYQQCLRCCKAFLEKTY.

N-acetylalanine is present on Ala2. The active-site Nucleophile is Cys13. Arg19 is an active-site residue. Asp130 serves as the catalytic Proton donor. Tyr132 and Tyr133 each carry phosphotyrosine.

It belongs to the low molecular weight phosphotyrosine protein phosphatase family. In terms of assembly, interacts with EPHA2; dephosphorylates EPHA2. Interacts with EPHB1. As to quaternary structure, interacts with the SH3 domain of SPTAN1. There is no interaction observed for isoform 2. In terms of processing, phosphorylated by LCK. Phosphorylation at Tyr-132 increases its phosphatase activity. Widely expressed with highest levels in brain and liver and lowest levels in muscle.

The protein resides in the cytoplasm. The catalysed reaction is O-phospho-L-tyrosyl-[protein] + H2O = L-tyrosyl-[protein] + phosphate. It catalyses the reaction a phosphate monoester + H2O = an alcohol + phosphate. With respect to regulation, inhibited by sulfhydryl reagents. Functionally, acts on tyrosine phosphorylated proteins, low-MW aryl phosphates and natural and synthetic acyl phosphates with differences in substrate specificity between isoform 1 and isoform 2. This is Low molecular weight phosphotyrosine protein phosphatase from Mus musculus (Mouse).